A 426-amino-acid polypeptide reads, in one-letter code: Serine--tRNA ligase (426 aa).

An L-serine-binding site is contributed by 231–233 (TAE). 262 to 264 (RSE) contacts ATP. Position 285 (Glu-285) interacts with L-serine. Residue 349–352 (EISS) coordinates ATP. An L-serine-binding site is contributed by Ser-385.

Belongs to the class-II aminoacyl-tRNA synthetase family. Type-1 seryl-tRNA synthetase subfamily. Homodimer. The tRNA molecule binds across the dimer.

Its subcellular location is the cytoplasm. The enzyme catalyses tRNA(Ser) + L-serine + ATP = L-seryl-tRNA(Ser) + AMP + diphosphate + H(+). It catalyses the reaction tRNA(Sec) + L-serine + ATP = L-seryl-tRNA(Sec) + AMP + diphosphate + H(+). It participates in aminoacyl-tRNA biosynthesis; selenocysteinyl-tRNA(Sec) biosynthesis; L-seryl-tRNA(Sec) from L-serine and tRNA(Sec): step 1/1. Catalyzes the attachment of serine to tRNA(Ser). Is also able to aminoacylate tRNA(Sec) with serine, to form the misacylated tRNA L-seryl-tRNA(Sec), which will be further converted into selenocysteinyl-tRNA(Sec). The sequence is that of Serine--tRNA ligase from Brevibacillus brevis (strain 47 / JCM 6285 / NBRC 100599).